A 585-amino-acid polypeptide reads, in one-letter code: SLAIN motif-containing protein-like (585 aa).

Disordered regions lie at residues 1-34 (MVVP…PNLT), 55-125 (NQTL…RVEE), 324-365 (QDYA…EDEC), 402-476 (PRLS…SDGQ), and 492-585 (GSMS…DGCY). Residues 68-83 (GGTNNSNLKAGSNINN) are compositionally biased toward polar residues. The segment covering 327–345 (ASTSASRRSSSASLQSLRR) has biased composition (low complexity). Residues 351-365 (QEFDSYSQEDEEDEC) are compositionally biased toward acidic residues. Polar residues-rich tracts occupy residues 425-434 (PNLTPRTSLR), 441-476 (NSRS…SDGQ), and 549-563 (ASPS…TPRS). The segment covering 575–585 (LTDESWKDGCY) has biased composition (basic and acidic residues).

It belongs to the SLAIN motif-containing family.

The chain is SLAIN motif-containing protein-like from Danio rerio (Zebrafish).